The following is a 373-amino-acid chain: RNA 3'-terminal phosphate cyclase-like protein (373 aa).

The protein belongs to the RNA 3'-terminal cyclase family. Type 2 subfamily. Part of the small subunit (SSU) processome, composed of more than 70 proteins and the RNA chaperone small nucleolar RNA (snoRNA) U3. Interacts with BMS1.

It localises to the nucleus. It is found in the nucleolus. Functionally, as part of the small subunit (SSU) processome, it plays a role in 40S-ribosomal-subunit biogenesis in the early pre-rRNA processing steps at sites A0, A1 and A2 that are required for proper maturation of the 18S RNA. Activates BMS1 by promoting GDP/GTP exchange. Does not have cyclase activity. The protein is RNA 3'-terminal phosphate cyclase-like protein (Rcl1) of Mus musculus (Mouse).